Here is a 292-residue protein sequence, read N- to C-terminus: F-box only protein 16 (292 aa).

One can recognise an F-box domain in the interval 86 to 132 (LDFTTKLPRVLSLYIFSFLDPRSLCRCAQVCWHWKNLAELDQLWMLK). Disordered stretches follow at residues 188–224 (SPEE…SSDK) and 238–292 (RDPM…PLCP). The span at 194 to 204 (SPLSAFRSSSS) shows a compositional bias: low complexity. Residues 260 to 273 (RQSHDKKNKLQDRT) show a composition bias toward basic and acidic residues.

As to quaternary structure, part of a SCF (SKP1-cullin-F-box) protein ligase complex. As to expression, expressed in heart, spleen and colon.

In terms of biological role, probably recognizes and binds to some phosphorylated proteins and promotes their ubiquitination and degradation. The sequence is that of F-box only protein 16 (FBXO16) from Homo sapiens (Human).